The following is a 100-amino-acid chain: uncharacterized protein (100 aa).

This is an uncharacterized protein from Acidianus filamentous virus 2 (isolate Italy/Pozzuoli) (AFV-2).